Here is a 213-residue protein sequence, read N- to C-terminus: Thymidylate kinase (213 aa).

10 to 17 (GPDGAGKT) serves as a coordination point for ATP.

Belongs to the thymidylate kinase family.

It catalyses the reaction dTMP + ATP = dTDP + ADP. Its function is as follows. Phosphorylation of dTMP to form dTDP in both de novo and salvage pathways of dTTP synthesis. The polypeptide is Thymidylate kinase (Limosilactobacillus reuteri (strain DSM 20016) (Lactobacillus reuteri)).